The chain runs to 1394 residues: DNA-directed RNA polymerase subunit beta' (1394 aa).

Zn(2+)-binding residues include cysteine 71, cysteine 73, cysteine 86, and cysteine 89. Mg(2+)-binding residues include aspartate 462, aspartate 464, and aspartate 466. Cysteine 810, cysteine 884, cysteine 891, and cysteine 894 together coordinate Zn(2+).

The protein belongs to the RNA polymerase beta' chain family. In terms of assembly, the RNAP catalytic core consists of 2 alpha, 1 beta, 1 beta' and 1 omega subunit. When a sigma factor is associated with the core the holoenzyme is formed, which can initiate transcription. Requires Mg(2+) as cofactor. The cofactor is Zn(2+).

It catalyses the reaction RNA(n) + a ribonucleoside 5'-triphosphate = RNA(n+1) + diphosphate. In terms of biological role, DNA-dependent RNA polymerase catalyzes the transcription of DNA into RNA using the four ribonucleoside triphosphates as substrates. The chain is DNA-directed RNA polymerase subunit beta' from Caulobacter sp. (strain K31).